Reading from the N-terminus, the 501-residue chain is Glycoprotein 3-alpha-L-fucosyltransferase A (501 aa).

The Cytoplasmic portion of the chain corresponds to 1-39 (MGVFSNLRGPKIGLTHEELPVVANGSTSSSSSPSSFKRK). The helical; Signal-anchor for type II membrane protein transmembrane segment at 40-60 (VSTFLPICVALVVIIEIGFLC) threads the bilayer. Residues 61–501 (RLDNASLVDT…PCPKFEVVFV (441 aa)) are Lumenal-facing. N-linked (GlcNAc...) asparagine glycosylation is found at asparagine 64, asparagine 337, asparagine 420, and asparagine 481.

Belongs to the glycosyltransferase 10 family. Requires Mg(2+) as cofactor. The cofactor is Mn(2+). Glycosylation may be important for enzymatic activity.

It localises to the golgi apparatus. The protein resides in the golgi stack membrane. It catalyses the reaction N(4)-{beta-D-GlcNAc-(1-&gt;2)-alpha-D-Man-(1-&gt;3)-[beta-D-GlcNAc-(1-&gt;2)-alpha-D-Man-(1-&gt;6)]-beta-D-Man-(1-&gt;4)-beta-D-GlcNAc-(1-&gt;4)-beta-D-GlcNAc}-L-asparaginyl-[protein] + GDP-beta-L-fucose = N(4)-{beta-D-GlcNAc-(1-&gt;2)-alpha-D-Man-(1-&gt;3)-[beta-D-GlcNAc-(1-&gt;2)-alpha-D-Man-(1-&gt;6)]-beta-D-Man-(1-&gt;4)-beta-D-GlcNAc-(1-&gt;4)-[alpha-L-Fuc(1-&gt;3)]-beta-D-GlcNAc}-L-asparaginyl-[protein] + GDP + H(+). Its pathway is protein modification; protein glycosylation. With respect to regulation, inhibited by Cu(2+) and Zn(2+). In terms of biological role, involved in cell wall synthesis. Preferentially catalyzes the addition of fucose in alpha 1-3 linkage to the first GlcNAc residue next to the peptide chains in N-glycans. In Arabidopsis thaliana (Mouse-ear cress), this protein is Glycoprotein 3-alpha-L-fucosyltransferase A (FUT11).